Reading from the N-terminus, the 166-residue chain is Large ribosomal subunit protein uL10 (166 aa).

This sequence belongs to the universal ribosomal protein uL10 family. In terms of assembly, part of the ribosomal stalk of the 50S ribosomal subunit. The N-terminus interacts with L11 and the large rRNA to form the base of the stalk. The C-terminus forms an elongated spine to which L12 dimers bind in a sequential fashion forming a multimeric L10(L12)X complex.

Forms part of the ribosomal stalk, playing a central role in the interaction of the ribosome with GTP-bound translation factors. In Bacillus cereus (strain 03BB102), this protein is Large ribosomal subunit protein uL10.